A 307-amino-acid chain; its full sequence is tRNA-cytidine(32) 2-sulfurtransferase (307 aa).

Residues 44–49 (SGGKDS) carry the PP-loop motif motif. Cysteine 119, cysteine 122, and cysteine 210 together coordinate [4Fe-4S] cluster.

It belongs to the TtcA family. As to quaternary structure, homodimer. The cofactor is Mg(2+). [4Fe-4S] cluster is required as a cofactor.

It localises to the cytoplasm. It catalyses the reaction cytidine(32) in tRNA + S-sulfanyl-L-cysteinyl-[cysteine desulfurase] + AH2 + ATP = 2-thiocytidine(32) in tRNA + L-cysteinyl-[cysteine desulfurase] + A + AMP + diphosphate + H(+). It functions in the pathway tRNA modification. Its function is as follows. Catalyzes the ATP-dependent 2-thiolation of cytidine in position 32 of tRNA, to form 2-thiocytidine (s(2)C32). The sulfur atoms are provided by the cysteine/cysteine desulfurase (IscS) system. This Aliivibrio fischeri (strain ATCC 700601 / ES114) (Vibrio fischeri) protein is tRNA-cytidine(32) 2-sulfurtransferase.